The sequence spans 230 residues: LexA repressor (230 aa).

The disordered stretch occupies residues 1-21 (MSDDSSETRTGGRRGADAGLT). The H-T-H motif DNA-binding region spans 44-64 (IREIGDAVGLTSTSSVAHQLR). Catalysis depends on for autocatalytic cleavage activity residues serine 154 and lysine 191.

The protein belongs to the peptidase S24 family. In terms of assembly, homodimer.

It catalyses the reaction Hydrolysis of Ala-|-Gly bond in repressor LexA.. Its function is as follows. Represses a number of genes involved in the response to DNA damage (SOS response), including recA and lexA. In the presence of single-stranded DNA, RecA interacts with LexA causing an autocatalytic cleavage which disrupts the DNA-binding part of LexA, leading to derepression of the SOS regulon and eventually DNA repair. The chain is LexA repressor from Mycobacterium sp. (strain JLS).